The sequence spans 463 residues: uncharacterized protein (463 aa).

Positions 9-67 (VLKKGQRFPLTIKRLGINGEGVGYFKRHVVFVPGALPGEEVVVEVTDVKPRFAEASIRK) constitute a TRAM domain. [4Fe-4S] cluster-binding residues include Cys-80, Cys-86, Cys-89, and Cys-169. Gln-293, Tyr-322, Asp-343, and Asp-391 together coordinate S-adenosyl-L-methionine. The Nucleophile role is filled by Cys-418.

It belongs to the class I-like SAM-binding methyltransferase superfamily. RNA M5U methyltransferase family.

This is an uncharacterized protein from Halalkalibacterium halodurans (strain ATCC BAA-125 / DSM 18197 / FERM 7344 / JCM 9153 / C-125) (Bacillus halodurans).